The primary structure comprises 287 residues: Coatomer subunit epsilon-1 (287 aa).

It belongs to the COPE family. As to quaternary structure, oligomeric complex that consists of at least the alpha, beta, beta', gamma, delta, epsilon and zeta subunits.

The protein resides in the cytoplasm. It is found in the golgi apparatus membrane. The protein localises to the cytoplasmic vesicle. Its subcellular location is the COPI-coated vesicle membrane. The coatomer is a cytosolic protein complex that binds to dilysine motifs and reversibly associates with Golgi non-clathrin-coated vesicles, which further mediate biosynthetic protein transport from the ER, via the Golgi up to the trans Golgi network. The coatomer complex is required for budding from Golgi membranes, and is essential for the retrograde Golgi-to-ER transport of dilysine-tagged proteins. The chain is Coatomer subunit epsilon-1 (COPE1) from Oryza sativa subsp. japonica (Rice).